The following is a 695-amino-acid chain: Putative pentatricopeptide repeat-containing protein At1g77010, mitochondrial (695 aa).

The transit peptide at 1–64 (MILKYNSSYR…KGFLSSIVIV (64 aa)) directs the protein to the mitochondrion. PPR repeat units follow at residues 61-91 (IVIVANHLLQMYSRSGKMGIARNLFDEMPDR), 92-122 (NYFSWNTMIEGYMNSGEKGTSLRFFDMMPER), 123-157 (DGYSWNVVVSGFAKAGELSVARRLFNAMPEKDVVT), 159-184 (NSLLHGYILNGYAEEALRLFKELNFS), 186-220 (DAITLTTVLKACAELEALKCGKQIHAQILIGGVEC), 221-251 (DSKMNSSLVNVYAKCGDLRMASYMLEQIREP), 252-282 (DDHSLSALISGYANCGRVNESRGLFDRKSNR), 283-313 (CVILWNSMISGYIANNMKMEALVLFNEMRNE), 317-351 (DSRTLAAVINACIGLGFLETGKQMHCHACKFGLID), 352-382 (DIVVASTLLDMYSKCGSPMEACKLFSEVESY), 383-417 (DTILLNSMIKVYFSCGRIDDAKRVFERIENKSLIS), 418-448 (WNSMTNGFSQNGCTVETLEYFHQMHKLDLPT), 449-483 (DEVSLSSVISACASISSLELGEQVFARATIVGLDS), 484-514 (DQVVSSSLIDLYCKCGFVEHGRRVFDTMVKS), 515-549 (DEVPWNSMISGYATNGQGFEAIDLFKKMSVAGIRP), 550-585 (TQITFMVVLTACNYCGLVEEGRKLFESMKVDHGFVP), and 586-616 (DKEHFSCMVDLLARAGYVEEAINLVEEMPFD). The segment at 621 to 695 (MWSSILRGCV…KNPGSSWTDC (75 aa)) is type E motif; degenerate.

This sequence belongs to the PPR family. PCMP-E subfamily.

It localises to the mitochondrion. This Arabidopsis thaliana (Mouse-ear cress) protein is Putative pentatricopeptide repeat-containing protein At1g77010, mitochondrial (PCMP-E5).